The following is a 255-amino-acid chain: Triosephosphate isomerase (255 aa).

9-11 (NWK) provides a ligand contact to substrate. The active-site Electrophile is histidine 96. Glutamate 168 acts as the Proton acceptor in catalysis. Substrate is bound by residues glycine 174 and serine 213.

The protein belongs to the triosephosphate isomerase family. In terms of assembly, homodimer.

The protein localises to the cytoplasm. It carries out the reaction D-glyceraldehyde 3-phosphate = dihydroxyacetone phosphate. It participates in carbohydrate biosynthesis; gluconeogenesis. It functions in the pathway carbohydrate degradation; glycolysis; D-glyceraldehyde 3-phosphate from glycerone phosphate: step 1/1. In terms of biological role, involved in the gluconeogenesis. Catalyzes stereospecifically the conversion of dihydroxyacetone phosphate (DHAP) to D-glyceraldehyde-3-phosphate (G3P). This chain is Triosephosphate isomerase, found in Buchnera aphidicola subsp. Acyrthosiphon pisum (strain APS) (Acyrthosiphon pisum symbiotic bacterium).